We begin with the raw amino-acid sequence, 404 residues long: MKLPIYLDYAATTPVDPRVAEKMMQCLTMDGIFGNPASRSHRYGWQAEEAVDIARNQVAELINADPREIVFTSGATESDNLAIKGVAHFYHKKGKHIITSKTEHKAVLDTCRQLEREGYEVTYLQPEPSGLIPVSMIEAAMREDTILVSIMQVNNEIGVIQDIDAIGELCRSRKIIFHVDAAQSAGKLPIDVQTTKVDLMSISGHKMYGPKGIGALYVSRKPRIRLEAAMHGGGHERGMRSGTLATHQIVGMGEAAAIAKADMEVDNERIRRLRDKLWNGINHIEETYINGDVEKRACGSLNVSFNFVEGESLMMALKDLAVSSGSACTSASLEPSYVLRALGLNDEMAHSSIRFSIGRFTTDEEIDHAIETIKESIGNLREMSPLWEMFKDGIDLDSVQWAHH.

Pyridoxal 5'-phosphate-binding positions include alanine 75–threonine 76, asparagine 155, glutamine 183, and serine 203–histidine 205. The residue at position 206 (lysine 206) is an N6-(pyridoxal phosphate)lysine. Threonine 243 contacts pyridoxal 5'-phosphate. The Cysteine persulfide intermediate role is filled by cysteine 328. Cysteine 328 is a binding site for [2Fe-2S] cluster.

This sequence belongs to the class-V pyridoxal-phosphate-dependent aminotransferase family. NifS/IscS subfamily. Homodimer. Forms a heterotetramer with IscU, interacts with other sulfur acceptors. The cofactor is pyridoxal 5'-phosphate.

It localises to the cytoplasm. It catalyses the reaction (sulfur carrier)-H + L-cysteine = (sulfur carrier)-SH + L-alanine. It functions in the pathway cofactor biosynthesis; iron-sulfur cluster biosynthesis. Its function is as follows. Master enzyme that delivers sulfur to a number of partners involved in Fe-S cluster assembly, tRNA modification or cofactor biosynthesis. Catalyzes the removal of elemental sulfur atoms from cysteine to produce alanine. Functions as a sulfur delivery protein for Fe-S cluster synthesis onto IscU, an Fe-S scaffold assembly protein, as well as other S acceptor proteins. The polypeptide is Cysteine desulfurase IscS (Shewanella pealeana (strain ATCC 700345 / ANG-SQ1)).